Here is a 438-residue protein sequence, read N- to C-terminus: Na(+)/H(+) antiporter NhaA (438 aa).

The next 11 helical transmembrane spans lie at 23–43 (FGGI…NSFL), 62–82 (FFIG…LFFL), 104–124 (SFPV…YFFL), 133–153 (GFGI…MLLG), 162–182 (VFLI…IALF), 185–205 (TNLK…LAVL), 221–241 (VLLW…AVIL), 302–322 (FLAP…NAGV), 337–357 (LGVI…ITFI), 372–392 (WWHI…SMFI), and 410–430 (IAIL…LFAL).

This sequence belongs to the NhaA Na(+)/H(+) (TC 2.A.33) antiporter family.

The protein localises to the cell inner membrane. The enzyme catalyses Na(+)(in) + 2 H(+)(out) = Na(+)(out) + 2 H(+)(in). Its function is as follows. Na(+)/H(+) antiporter that extrudes sodium in exchange for external protons. This Helicobacter pylori (strain ATCC 700392 / 26695) (Campylobacter pylori) protein is Na(+)/H(+) antiporter NhaA.